Reading from the N-terminus, the 480-residue chain is Protein nucleotidyltransferase YdiU (480 aa).

Positions 86, 88, 89, 109, 121, 122, 172, and 179 each coordinate ATP. Asp248 acts as the Proton acceptor in catalysis. Asn249 and Asp258 together coordinate Mg(2+). Asp258 contacts ATP.

This sequence belongs to the SELO family. The cofactor is Mg(2+). Mn(2+) serves as cofactor.

It carries out the reaction L-seryl-[protein] + ATP = 3-O-(5'-adenylyl)-L-seryl-[protein] + diphosphate. The enzyme catalyses L-threonyl-[protein] + ATP = 3-O-(5'-adenylyl)-L-threonyl-[protein] + diphosphate. It catalyses the reaction L-tyrosyl-[protein] + ATP = O-(5'-adenylyl)-L-tyrosyl-[protein] + diphosphate. The catalysed reaction is L-histidyl-[protein] + UTP = N(tele)-(5'-uridylyl)-L-histidyl-[protein] + diphosphate. It carries out the reaction L-seryl-[protein] + UTP = O-(5'-uridylyl)-L-seryl-[protein] + diphosphate. The enzyme catalyses L-tyrosyl-[protein] + UTP = O-(5'-uridylyl)-L-tyrosyl-[protein] + diphosphate. Functionally, nucleotidyltransferase involved in the post-translational modification of proteins. It can catalyze the addition of adenosine monophosphate (AMP) or uridine monophosphate (UMP) to a protein, resulting in modifications known as AMPylation and UMPylation. The polypeptide is Protein nucleotidyltransferase YdiU (Salmonella newport (strain SL254)).